Reading from the N-terminus, the 1049-residue chain is Dyslexia-associated protein KIAA0319-like protein (1049 aa).

At 1 to 29 (MEKRLGVKPNPASWILSGYYWQTSAKWLR) the chain is on the cytoplasmic side. Residues 30–50 (TLYLFYTCFCFSVLWLSTDAS) traverse the membrane as a helical segment. Residues 49–127 (ASESRCQQGK…AFRTHSSNSM (79 aa)) enclose the MANSC domain. The Extracellular segment spans residues 51 to 932 (ESRCQQGKTQ…ESNCEWSVLY (882 aa)). The segment at 234-277 (TTDLTAELPGGPKNVSAQPEIPEGLATTPSTQQVKSSEKTQIAV) is disordered. N247, N395, and N487 each carry an N-linked (GlcNAc...) asparagine glycan. 5 consecutive PKD domains span residues 310 to 401 (VVSA…VKPE), 409 to 498 (IAIV…VNKA), 504 to 594 (VANA…VQPE), 600 to 688 (QADA…VKEE), and 694 to 785 (IAKI…VKPD). The helical transmembrane segment at 933–953 (VIIATFVIVVALGILSWTVIC) threads the bilayer. Residues 954–1049 (CCKRQKGKPK…KARSPREEIL (96 aa)) lie on the Cytoplasmic side of the membrane. The residue at position 974 (T974) is a Phosphothreonine. Phosphoserine is present on residues S978, S1009, and S1031. Residues 1022–1049 (GKLLHGQNGSVPNGQTPLKARSPREEIL) form a disordered region. Positions 1028–1037 (QNGSVPNGQT) are enriched in polar residues. The residue at position 1037 (T1037) is a Phosphothreonine.

Interacts with RTN4R. Post-translationally, N-glycosylated.

Its subcellular location is the cytoplasmic granule membrane. It is found in the golgi apparatus membrane. It localises to the golgi apparatus. The protein resides in the trans-Golgi network membrane. The protein localises to the cell membrane. Possible role in axon guidance through interaction with RTN4R. The chain is Dyslexia-associated protein KIAA0319-like protein from Pongo abelii (Sumatran orangutan).